Here is a 390-residue protein sequence, read N- to C-terminus: Na(+)/H(+) antiporter NhaA 2 (390 aa).

The next 11 membrane-spanning stretches (helical) occupy residues 23 to 43 (IVLI…LAAA), 63 to 83 (LHLW…GLEI), 100 to 120 (LPVL…LAIT), 129 to 149 (GWAI…ALVG), 158 to 178 (LFLL…IALF), 181 to 201 (SGLK…LVLV), 208 to 228 (ALLP…HSGI), 265 to 285 (GFVI…GADF), 293 to 313 (LGIA…SILV), 331 to 351 (LWGI…IAGL), and 362 to 382 (EAKL…LLVL).

This sequence belongs to the NhaA Na(+)/H(+) (TC 2.A.33) antiporter family.

The protein localises to the cell inner membrane. The enzyme catalyses Na(+)(in) + 2 H(+)(out) = Na(+)(out) + 2 H(+)(in). In terms of biological role, na(+)/H(+) antiporter that extrudes sodium in exchange for external protons. This Novosphingobium aromaticivorans (strain ATCC 700278 / DSM 12444 / CCUG 56034 / CIP 105152 / NBRC 16084 / F199) protein is Na(+)/H(+) antiporter NhaA 2.